The sequence spans 397 residues: Elongation factor Tu 1 (397 aa).

In terms of domain architecture, tr-type G spans 10-207 (KPHVNVGTIG…TLDSYIPEPV (198 aa)). The G1 stretch occupies residues 19 to 26 (GHVDHGKT). 19–26 (GHVDHGKT) contributes to the GTP binding site. Thr26 is a binding site for Mg(2+). The interval 60-64 (GITIN) is G2. Residues 81 to 84 (DCPG) are G3. Residues 81–85 (DCPGH) and 136–139 (NKAD) each bind GTP. A G4 region spans residues 136–139 (NKAD). A G5 region spans residues 174-176 (SAL).

The protein belongs to the TRAFAC class translation factor GTPase superfamily. Classic translation factor GTPase family. EF-Tu/EF-1A subfamily. As to quaternary structure, monomer.

The protein resides in the cytoplasm. It carries out the reaction GTP + H2O = GDP + phosphate + H(+). Its function is as follows. GTP hydrolase that promotes the GTP-dependent binding of aminoacyl-tRNA to the A-site of ribosomes during protein biosynthesis. This chain is Elongation factor Tu 1, found in Stutzerimonas stutzeri (strain A1501) (Pseudomonas stutzeri).